A 446-amino-acid polypeptide reads, in one-letter code: Probable E3 ubiquitin-protein ligase XBOS31 (446 aa).

ANK repeat units lie at residues D46–V75, K79–T108, R113–G142, R160–A189, and P197–R227. The segment at C317–R366 adopts an RING-type zinc-finger fold. Positions T376 to S401 are disordered.

The enzyme catalyses S-ubiquitinyl-[E2 ubiquitin-conjugating enzyme]-L-cysteine + [acceptor protein]-L-lysine = [E2 ubiquitin-conjugating enzyme]-L-cysteine + N(6)-ubiquitinyl-[acceptor protein]-L-lysine.. Its pathway is protein modification; protein ubiquitination. The protein is Probable E3 ubiquitin-protein ligase XBOS31 (XBOS31) of Oryza sativa subsp. japonica (Rice).